We begin with the raw amino-acid sequence, 393 residues long: Dual specificity mitogen-activated protein kinase kinase 1 (393 aa).

Positions 1-26 are disordered; sequence MPKKKPTPIQLNPTPDGSAVNGTSSA. The span at 9–26 shows a compositional bias: polar residues; the sequence is IQLNPTPDGSAVNGTSSA. One can recognise a Protein kinase domain in the interval 68–361; it reads FEKISELGAG…LKQLLVHAFI (294 aa). Residues 74–82 and Lys97 contribute to the ATP site; that span reads LGAGNGGVV. Asp190 acts as the Proton acceptor in catalysis. Phosphoserine; by RAF occurs at positions 218 and 222. An RAF1-binding region spans residues 270 to 307; the sequence is ELELLFGCQVEGDAAETPPRPRTPGRPLSSYGMDSRPP. Thr286 bears the Phosphothreonine mark. Thr292 is modified (phosphothreonine; by MAPK1). Ser298 carries the post-translational modification Phosphoserine; by PAK.

The protein belongs to the protein kinase superfamily. STE Ser/Thr protein kinase family. MAP kinase kinase subfamily. In terms of assembly, found in a complex with at least BRAF, HRAS, MAP2K1, MAPK3/ERK1 and RGS14. Forms a heterodimer with MAP2K2/MEK2. Forms heterodimers with KSR2 which further dimerize to form tetramers. Interacts with KSR1 or KSR2 and BRAF; the interaction with KSR1 or KSR2 mediates KSR1-BRAF or KSR2-BRAF dimerization. Interacts with ARBB2, LAMTOR3, MAPK1/ERK2 and RAF1. Interacts with MAPK1/ERK2. Interacts with MORG1. Interacts with PPARG. Interacts with isoform 1 of VRK2. Interacts with SGK1. Interacts with BIRC6/bruce. Interacts with KAT7; the interaction promotes KAT7 phosphorylation. Interacts with RAF1 and NEK10; the interaction is required for ERK1/2-signaling pathway activation in response to UV irradiation. Interacts with TRAF3IP3. Interacts with MOS. Post-translationally, phosphorylation at Ser-218 and Ser-222 by MAP kinase kinase kinases (BRAF or MEKK1) positively regulates the kinase activity. Also phosphorylated at Thr-292 by MAPK1/ERK2 and at Ser-298 by PAK. MAPK1/ERK2 phosphorylation of Thr-292 occurs in response to cellular adhesion and leads to inhibition of Ser-298 phosphorylation by PAK. Autophosphorylated at Ser-218 and Ser-222, autophosphosphorylation is promoted by NEK10 following UV irradiation.

Its subcellular location is the cytoplasm. It is found in the cytoskeleton. It localises to the microtubule organizing center. The protein localises to the centrosome. The protein resides in the spindle pole body. Its subcellular location is the nucleus. It is found in the membrane. It carries out the reaction L-seryl-[protein] + ATP = O-phospho-L-seryl-[protein] + ADP + H(+). The catalysed reaction is L-threonyl-[protein] + ATP = O-phospho-L-threonyl-[protein] + ADP + H(+). The enzyme catalyses L-tyrosyl-[protein] + ATP = O-phospho-L-tyrosyl-[protein] + ADP + H(+). Its activity is regulated as follows. Ras proteins such as HRAS mediate the activation of RAF proteins such as RAF1 or BRAF which in turn activate extracellular signal-regulated kinases (ERK) through MAPK (mitogen-activated protein kinases) and ERK kinases MAP2K1/MEK1 and MAP2K2/MEK2. Activation occurs through phosphorylation of Ser-218 and Ser-222. MAP2K1/MEK1 binds KSR1 or KSR2 releasing the inhibitory intramolecular interaction between KSR1 or KSR2 protein kinase and N-terminal domains. This allows KSR1 or KSR2 dimerization with BRAF leading to BRAF activation and phosphorylation of MAP2K1. MAP2K1/MEK1 is also the target of negative feed-back regulation by its substrate kinases, such as MAPK1/ERK2. These phosphorylate MAP2K1/MEK1 on Thr-292, thereby facilitating dephosphorylation of the activating residues Ser-218 and Ser-222. Inhibited by serine/threonine phosphatase 2A. Functionally, dual specificity protein kinase which acts as an essential component of the MAP kinase signal transduction pathway. Binding of extracellular ligands such as growth factors, cytokines and hormones to their cell-surface receptors activates RAS and this initiates RAF1 activation. RAF1 then further activates the dual-specificity protein kinases MAP2K1/MEK1 and MAP2K2/MEK2. Both MAP2K1/MEK1 and MAP2K2/MEK2 function specifically in the MAPK/ERK cascade, and catalyze the concomitant phosphorylation of a threonine and a tyrosine residue in a Thr-Glu-Tyr sequence located in the extracellular signal-regulated kinases MAPK3/ERK1 and MAPK1/ERK2, leading to their activation and further transduction of the signal within the MAPK/ERK cascade. Activates BRAF in a KSR1 or KSR2-dependent manner; by binding to KSR1 or KSR2 releases the inhibitory intramolecular interaction between KSR1 or KSR2 protein kinase and N-terminal domains which promotes KSR1 or KSR2-BRAF dimerization and BRAF activation. Depending on the cellular context, this pathway mediates diverse biological functions such as cell growth, adhesion, survival and differentiation, predominantly through the regulation of transcription, metabolism and cytoskeletal rearrangements. One target of the MAPK/ERK cascade is peroxisome proliferator-activated receptor gamma (PPARG), a nuclear receptor that promotes differentiation and apoptosis. MAP2K1/MEK1 has been shown to export PPARG from the nucleus. The MAPK/ERK cascade is also involved in the regulation of endosomal dynamics, including lysosome processing and endosome cycling through the perinuclear recycling compartment (PNRC), as well as in the fragmentation of the Golgi apparatus during mitosis. This Cricetulus griseus (Chinese hamster) protein is Dual specificity mitogen-activated protein kinase kinase 1 (MAP2K1).